The chain runs to 243 residues: MRVLTIIPTYNEIESLPLTLGRLRDAVPESDVLVVDDASPDGTGDWADTRAAEDPSVHVLHRTTKDGLGGAYIAGFRWGLERGYDVLVEMDADGSHQPEQLPRLLEAVRTADLVIGSRRVPGGKMVNWPTSRKMISWAGSLYPRIMLGLNLTDITAGYRAYRADTLRAIDLDAIESKGYGFQVDMTFRTARLGKRIVEVPITFVERELGESKMSGGIVGEAVVNVTRWGLAARWEGLRARLGL.

Belongs to the glycosyltransferase 2 family.

It catalyses the reaction di-trans,octa-cis-undecaprenyl phosphate + GDP-alpha-D-mannose = D-mannosyl di-trans,octa-cis-undecaprenyl phosphate + GDP. Its function is as follows. Catalyzes the transfer of mannose from GDP-mannose to D-mannosyl-1-phosphoundecaprenol. This Micrococcus luteus (strain ATCC 4698 / DSM 20030 / JCM 1464 / CCM 169 / CCUG 5858 / IAM 1056 / NBRC 3333 / NCIMB 9278 / NCTC 2665 / VKM Ac-2230) (Micrococcus lysodeikticus) protein is Undecaprenyl-phosphate mannosyltransferase.